The chain runs to 427 residues: Methylenetetrahydrofolate--tRNA-(uracil-5-)-methyltransferase TrmFO (427 aa).

Residue 6-11 (GAGLAG) participates in FAD binding.

The protein belongs to the MnmG family. TrmFO subfamily. FAD serves as cofactor.

It is found in the cytoplasm. The catalysed reaction is uridine(54) in tRNA + (6R)-5,10-methylene-5,6,7,8-tetrahydrofolate + NADH + H(+) = 5-methyluridine(54) in tRNA + (6S)-5,6,7,8-tetrahydrofolate + NAD(+). It catalyses the reaction uridine(54) in tRNA + (6R)-5,10-methylene-5,6,7,8-tetrahydrofolate + NADPH + H(+) = 5-methyluridine(54) in tRNA + (6S)-5,6,7,8-tetrahydrofolate + NADP(+). Functionally, catalyzes the folate-dependent formation of 5-methyl-uridine at position 54 (M-5-U54) in all tRNAs. The chain is Methylenetetrahydrofolate--tRNA-(uracil-5-)-methyltransferase TrmFO from Acholeplasma laidlawii (strain PG-8A).